We begin with the raw amino-acid sequence, 95 residues long: Synaptobrevin-A (95 aa).

Residues 1–70 (MSEPVNKVKQ…KRLMWCRNIK (70 aa)) lie on the Cytoplasmic side of the membrane. One can recognise a v-SNARE coiled-coil homology domain in the interval 7 to 67 (KVKQTQQQVD…NEIKRLMWCR (61 aa)). The chain crosses the membrane as a helical; Anchor for type IV membrane protein span at residues 71–91 (LTLIIIAVVVLLLVVIIVPIV). Over 92-95 (LKFT) the chain is Vesicular.

This sequence belongs to the synaptobrevin family.

The protein resides in the cytoplasmic vesicle. The protein localises to the secretory vesicle membrane. Functionally, involved in the targeting and/or fusion of transport vesicles to their target membrane. This chain is Synaptobrevin-A (sybA), found in Dictyostelium discoideum (Social amoeba).